We begin with the raw amino-acid sequence, 501 residues long: Aldehyde dehydrogenase, cytosolic 1 (501 aa).

246-251 (GSTEVG) provides a ligand contact to NAD(+). The Proton acceptor role is filled by Glu269. Cys303 (nucleophile) is an active-site residue.

It belongs to the aldehyde dehydrogenase family. In terms of assembly, homotetramer. As to expression, eye specific, with very high expression in the lens.

It localises to the cytoplasm. The enzyme catalyses an aldehyde + NAD(+) + H2O = a carboxylate + NADH + 2 H(+). The protein operates within alcohol metabolism; ethanol degradation; acetate from ethanol: step 2/2. Functionally, major component of the eye of elephant shrews, which in contrast to other mammals, possesses both a lens- and a non-lens class-1 aldehyde dehydrogenase 1. This eye-specific form is a structural protein of the lens and, in other part of the eye, serves as the major form of ALDH1. Can convert/oxidize retinaldehyde to retinoic acid. In Elephantulus edwardii (Cape long-eared elephant shrew), this protein is Aldehyde dehydrogenase, cytosolic 1 (ALDH1).